An 88-amino-acid chain; its full sequence is Large ribosomal subunit protein bL27 (88 aa).

The tract at residues 1 to 21 (MAHKKGASSSRNGRDSAAQRL) is disordered.

Belongs to the bacterial ribosomal protein bL27 family.

The sequence is that of Large ribosomal subunit protein bL27 from Mycobacterium sp. (strain MCS).